A 215-amino-acid chain; its full sequence is MLQVYLVRHGETQWNAERRIQGQSDSPLTAHGERQAWQVGERARTLGITHIITSDLGRTRRTAEIIAEACGCSVIADARLRELDMGVLEKRHIDSLSDEEEGWRRQLVNGTPDGRIPQGESMQELSERMHAALASCLELPAGSRPLLVSHGIALGCLVSTILGLPAYAERRLRLRNCSISRVDYQQSPWLASGWVVETAGDVSHLDAPAMDELQR.

Substrate-binding positions include Arg8–Asn15, Gln21–Gly22, Arg58, Arg60, Glu82–Met85, Arg104–Arg105, and Gly151–Ile152. The active-site Tele-phosphohistidine intermediate is the His9. The Proton donor/acceptor role is filled by Glu82.

It belongs to the phosphoglycerate mutase family. GpmB subfamily.

It catalyses the reaction (2R)-2-phosphoglycerate = (2R)-3-phosphoglycerate. Its pathway is carbohydrate degradation; glycolysis; pyruvate from D-glyceraldehyde 3-phosphate: step 3/5. This Klebsiella pneumoniae (strain 342) protein is Probable phosphoglycerate mutase GpmB.